A 240-amino-acid chain; its full sequence is Sugar fermentation stimulation protein homolog (240 aa).

This sequence belongs to the SfsA family.

In Saccharolobus islandicus (strain L.S.2.15 / Lassen #1) (Sulfolobus islandicus), this protein is Sugar fermentation stimulation protein homolog.